The chain runs to 82 residues: Putative membrane protein insertion efficiency factor (82 aa).

Positions 61–82 (HEGGYDPVPKRKNKNSEGKREE) are disordered.

Belongs to the UPF0161 family.

The protein resides in the cell inner membrane. Functionally, could be involved in insertion of integral membrane proteins into the membrane. In Fusobacterium nucleatum subsp. nucleatum (strain ATCC 25586 / DSM 15643 / BCRC 10681 / CIP 101130 / JCM 8532 / KCTC 2640 / LMG 13131 / VPI 4355), this protein is Putative membrane protein insertion efficiency factor.